A 173-amino-acid polypeptide reads, in one-letter code: Photosystem I assembly protein Ycf3 (173 aa).

TPR repeat units lie at residues 35-68 (AFAY…EEDP), 72-105 (SYIL…NPRM), and 113-146 (AVIY…WKRA).

The protein belongs to the Ycf3 family.

The protein resides in the cellular thylakoid membrane. In terms of biological role, essential for the assembly of the photosystem I (PSI) complex. May act as a chaperone-like factor to guide the assembly of the PSI subunits. This is Photosystem I assembly protein Ycf3 from Thermosynechococcus vestitus (strain NIES-2133 / IAM M-273 / BP-1).